The chain runs to 157 residues: Transmembrane protein 50A (157 aa).

An N-acetylserine modification is found at Ser-2. Ser-2 carries the post-translational modification Phosphoserine. 4 helical membrane-spanning segments follow: residues 26 to 46 (IAAG…AVIY), 58 to 78 (ACGV…NGQV), 95 to 115 (IWLF…MWIL), and 126 to 146 (IVYP…GGLV).

This sequence belongs to the UPF0220 family.

It is found in the membrane. This chain is Transmembrane protein 50A (TMEM50A), found in Homo sapiens (Human).